The chain runs to 942 residues: Netrin receptor UNC5B-b (942 aa).

The first 30 residues, 1–30, serve as a signal peptide directing secretion; the sequence is MYLSRIPGGAALAALLVALLLCCNFPPSIA. Over 31 to 380 the chain is Extracellular; the sequence is GIEYSDVLPD…LESTGDVALY (350 aa). An Ig-like domain is found at 51–148; that stretch reads PHFLLEPEDA…AGTTKSKRSY (98 aa). 9 disulfides stabilise this stretch: C72–C133, C84–C131, C177–C228, C261–C298, C265–C302, C276–C288, C317–C351, C321–C356, and C329–C341. Positions 150-245 constitute an Ig-like C2-type domain; the sequence is RIAYLRKNFD…KRRSTTATVI (96 aa). N-linked (GlcNAc...) asparagine glycosylation is present at N225. 2 consecutive TSP type-1 domains span residues 249–303 and 305–357; these read NGGW…TMCP and DGGW…GLCM. N-linked (GlcNAc...) asparagine glycosylation is present at N350. The chain crosses the membrane as a helical span at residues 381 to 401; it reads AGLVVAIFIIIILLMAVGIVV. The Cytoplasmic segment spans residues 402–942; sequence YRRNCREFDT…MLVMATDGDC (541 aa). The ZU5 domain maps to 541 to 684; sequence NSVTGTFGSL…LGTYAFVGES (144 aa). Residues 687-835 form a UPA domain region; that stretch reads RSAIKRLQLA…LEENVKSFDP (149 aa). The 78-residue stretch at 863–940 folds into the Death domain; that stretch reads ICNSLDAPNS…EMMLVMATDG (78 aa).

This sequence belongs to the unc-5 family. In terms of assembly, interacts (via extracellular domain) with flrt3 (via extracellular domain). Interacts with rnd1.

It localises to the cell membrane. Its function is as follows. Plays a role in cell-cell adhesion during embryonic development. Receptor for netrin required for axon guidance. Mediates axon repulsion of neuronal growth cones in the developing nervous system upon ligand binding. In Xenopus laevis (African clawed frog), this protein is Netrin receptor UNC5B-b.